A 124-amino-acid polypeptide reads, in one-letter code: MPRVKSNVVRLKRKKQILKHAKGAFGGRSKLWKAAKETVERGWRYAYRDRKNKKRDFRRLWIVRINAAARLHDMSYNAFINGLHASGIEVDRKVLADLAVREPEAFAAIAEQAKKALDAKVAAA.

Belongs to the bacterial ribosomal protein bL20 family.

Binds directly to 23S ribosomal RNA and is necessary for the in vitro assembly process of the 50S ribosomal subunit. It is not involved in the protein synthesizing functions of that subunit. This Gemmatimonas aurantiaca (strain DSM 14586 / JCM 11422 / NBRC 100505 / T-27) protein is Large ribosomal subunit protein bL20.